Reading from the N-terminus, the 101-residue chain is MKKTWLPFLLLPLLVSATIFSAQAPYDTAQGFEGLNIGAGLAIGLAAIGAGVAVGMAAAAGIGVLTERRDMFGTILIFVAIGEGIAVYGILFAVLMLFGKF.

A run of 3 helical transmembrane segments spans residues 5-25, 37-57, and 75-95; these read WLPF…AQAP, IGAG…VGMA, and ILIF…FAVL.

This sequence belongs to the V-ATPase proteolipid subunit family. As to quaternary structure, has multiple subunits with at least A(3), B(3), C, D, E, F, H, I and proteolipid K(x). In terms of processing, the N-terminus is blocked.

It is found in the cell membrane. Component of the A-type ATP synthase that produces ATP from ADP in the presence of a proton gradient across the membrane. This Sulfurisphaera tokodaii (strain DSM 16993 / JCM 10545 / NBRC 100140 / 7) (Sulfolobus tokodaii) protein is A-type ATP synthase subunit K.